The primary structure comprises 545 residues: Chaperonin GroEL 1 (545 aa).

ATP is bound by residues 30 to 33, Lys51, 87 to 91, Gly415, and Asp495; these read TLGP and DGTTT.

It belongs to the chaperonin (HSP60) family. Forms a cylinder of 14 subunits composed of two heptameric rings stacked back-to-back. Interacts with the co-chaperonin GroES.

It localises to the cytoplasm. The enzyme catalyses ATP + H2O + a folded polypeptide = ADP + phosphate + an unfolded polypeptide.. In terms of biological role, together with its co-chaperonin GroES, plays an essential role in assisting protein folding. The GroEL-GroES system forms a nano-cage that allows encapsulation of the non-native substrate proteins and provides a physical environment optimized to promote and accelerate protein folding. The chain is Chaperonin GroEL 1 from Sinorhizobium medicae (strain WSM419) (Ensifer medicae).